A 344-amino-acid chain; its full sequence is Eukaryotic translation initiation factor 2 subunit alpha (344 aa).

Residues 21–92 (DMAVMIQVKT…ERGYIDLSKR (72 aa)) form the S1 motif domain. At Ser56 the chain carries Phosphoserine; by GCN2. The tract at residues 309 to 344 (LRMDNEEMSGDEGSEDEEEDTGMGEVDIDGGSGIIE) is disordered. Positions 314 to 336 (EEMSGDEGSEDEEEDTGMGEVDI) are enriched in acidic residues. Phosphoserine; by CK2 occurs at positions 317 and 322.

It belongs to the eIF-2-alpha family. In terms of assembly, eukaryotic translation initiation factor 2 eIF2 is a heterotrimeric complex composed of an alpha, a beta and a gamma subunit. Phosphorylated at Ser-56 by GCN2. Phosphorylated at Ser-317 and Ser-322 by CK2.

It is found in the cytoplasm. It localises to the cytosol. Its function is as follows. Functions in the early steps of protein synthesis by forming a ternary complex with GTP and initiator tRNA. This complex binds to a 40S ribosomal subunit, followed by mRNA binding to form a 43S pre-initiation complex. Junction of the 60S ribosomal subunit to form the 80S initiation complex is preceded by hydrolysis of the GTP bound to eIF-2 and release of an eIF-2-GDP binary complex. In order for eIF-2 to recycle and catalyze another round of initiation, the GDP bound to eIF-2 must exchange with GTP by way of a reaction catalyzed by eIF2B. The protein is Eukaryotic translation initiation factor 2 subunit alpha of Arabidopsis thaliana (Mouse-ear cress).